The sequence spans 736 residues: Phosphoribosylformylglycinamidine synthase subunit PurL (736 aa).

The active site involves His48. The ATP site is built by Tyr51 and Lys90. Glu92 serves as a coordination point for Mg(2+). Substrate is bound by residues Ser93–His96 and Arg115. His94 (proton acceptor) is an active-site residue. Asp116 provides a ligand contact to Mg(2+). Residue Gln239 participates in substrate binding. Residue Asp267 participates in Mg(2+) binding. Glu311–Gln313 serves as a coordination point for substrate. ATP is bound by residues Asp492 and Gly529. Asn530 is a binding site for Mg(2+). Ser532 lines the substrate pocket.

It belongs to the FGAMS family. As to quaternary structure, monomer. Part of the FGAM synthase complex composed of 1 PurL, 1 PurQ and 2 PurS subunits.

It is found in the cytoplasm. The catalysed reaction is N(2)-formyl-N(1)-(5-phospho-beta-D-ribosyl)glycinamide + L-glutamine + ATP + H2O = 2-formamido-N(1)-(5-O-phospho-beta-D-ribosyl)acetamidine + L-glutamate + ADP + phosphate + H(+). Its pathway is purine metabolism; IMP biosynthesis via de novo pathway; 5-amino-1-(5-phospho-D-ribosyl)imidazole from N(2)-formyl-N(1)-(5-phospho-D-ribosyl)glycinamide: step 1/2. Functionally, part of the phosphoribosylformylglycinamidine synthase complex involved in the purines biosynthetic pathway. Catalyzes the ATP-dependent conversion of formylglycinamide ribonucleotide (FGAR) and glutamine to yield formylglycinamidine ribonucleotide (FGAM) and glutamate. The FGAM synthase complex is composed of three subunits. PurQ produces an ammonia molecule by converting glutamine to glutamate. PurL transfers the ammonia molecule to FGAR to form FGAM in an ATP-dependent manner. PurS interacts with PurQ and PurL and is thought to assist in the transfer of the ammonia molecule from PurQ to PurL. This is Phosphoribosylformylglycinamidine synthase subunit PurL from Beijerinckia indica subsp. indica (strain ATCC 9039 / DSM 1715 / NCIMB 8712).